A 364-amino-acid polypeptide reads, in one-letter code: Nucleosome assembly protein 1;2 (364 aa).

A coiled-coil region spans residues 32 to 86; it reads VESIKNTLQGLAARHTDVLESLEPKVRKRVEVLREIQSQHDDLEAKFFEERAALE. The Nuclear export signal motif lies at 53 to 68; that stretch reads LEPKVRKRVEVLREIQ. Residues 227 to 232 carry the Nuclear localization signal motif; it reads KKKPKK. Disordered stretches follow at residues 250-269 and 301-364; these read FNFFSPPQVPDDDEEIDEDT and GEAA…CKQQ. Acidic residues-rich tracts occupy residues 259-269 and 304-340; these read PDDDEEIDEDT and AQDEDFEGIMDDEDDDDEDDDDDEDEDDEGDDEDDED. Cysteine 361 carries the cysteine methyl ester modification. Cysteine 361 carries S-farnesyl cysteine lipidation. A propeptide spans 362-364 (removed in mature form); the sequence is KQQ.

This sequence belongs to the nucleosome assembly protein (NAP) family.

Its subcellular location is the nucleus. It localises to the cytoplasm. In terms of biological role, may modulate chromatin structure by regulation of nucleosome assembly/disassembly. In Oryza sativa subsp. japonica (Rice), this protein is Nucleosome assembly protein 1;2 (NAP1;2).